Here is a 388-residue protein sequence, read N- to C-terminus: MKIHEYQAKEILRKFGVAVPRGYLAVTPLEAEGAARQLGGGISAVKAQIHAGGRGKGGGVKLARSPDEARQHAEAMLGMMLKTPQTGPEGQEVRKVYVEEGCRIARELYLGMTLDREIGRLAVMASVEGGVDIEEVAAKHPDKILREWISPLTGLMPFQARRLAFGLGLSGDSVTAFVRFATGLYNAYVATDASLAEINPLVITVGGEVLALDAKMNFDDNALYRHPDIAAMRDPDEEDPKETQAKEYDLSYIALDGDIGCMVNGAGLAMATMDVIKLSGGQPANFLDVGGGADEDKVTAAFKIILSDPHVKAVLVNIFGGIMKCDVIANGIVAAAKQVGLSIPLVVRLEGTNVELGKEILAHSELKIIPADDLGEAARKAVQAARAA.

Residues 9-244 (KEILRKFGVA…PDEEDPKETQ (236 aa)) form the ATP-grasp domain. ATP contacts are provided by residues K46, 53 to 55 (GRG), E99, C102, and E107. N199 and D213 together coordinate Mg(2+). Substrate is bound by residues N264 and 321–323 (GIM).

This sequence belongs to the succinate/malate CoA ligase beta subunit family. Heterotetramer of two alpha and two beta subunits. Requires Mg(2+) as cofactor.

The catalysed reaction is succinate + ATP + CoA = succinyl-CoA + ADP + phosphate. The enzyme catalyses GTP + succinate + CoA = succinyl-CoA + GDP + phosphate. Its pathway is carbohydrate metabolism; tricarboxylic acid cycle; succinate from succinyl-CoA (ligase route): step 1/1. Its function is as follows. Succinyl-CoA synthetase functions in the citric acid cycle (TCA), coupling the hydrolysis of succinyl-CoA to the synthesis of either ATP or GTP and thus represents the only step of substrate-level phosphorylation in the TCA. The beta subunit provides nucleotide specificity of the enzyme and binds the substrate succinate, while the binding sites for coenzyme A and phosphate are found in the alpha subunit. This Anaeromyxobacter dehalogenans (strain 2CP-C) protein is Succinate--CoA ligase [ADP-forming] subunit beta.